We begin with the raw amino-acid sequence, 210 residues long: Large ribosomal subunit protein bL25 (210 aa).

A disordered region spans residues 175–210 (IATILPPQQEEEIDSGEQQEAGQPDAAEGRETTPEE). The span at 201-210 (AEGRETTPEE) shows a compositional bias: basic and acidic residues.

This sequence belongs to the bacterial ribosomal protein bL25 family. CTC subfamily. In terms of assembly, part of the 50S ribosomal subunit; part of the 5S rRNA/L5/L18/L25 subcomplex. Contacts the 5S rRNA. Binds to the 5S rRNA independently of L5 and L18.

This is one of the proteins that binds to the 5S RNA in the ribosome where it forms part of the central protuberance. The chain is Large ribosomal subunit protein bL25 from Geobacillus kaustophilus (strain HTA426).